Consider the following 197-residue polypeptide: MSTILIAIIALAALAAVFGAILGFASIRFKVEADPIVDQIDSILPQTQCGQCGYPGCRPYAEAIANGDQINKCPPGGQATIEKLADLMGVEAEESAHDLDSKVKTVAFIHEDMCIGCTKCIQACPVDAIVGGTKALHTVIKDECTGCDLCVAPCPTDCIEMIPVETTTESWKWKLNAIPVVNITDAANAANVTDSIK.

A hydrophobic region spans residues 1–26 (MSTILIAIIALAALAAVFGAILGFAS). The region spanning 32 to 90 (EADPIVDQIDSILPQTQCGQCGYPGCRPYAEAIANGDQINKCPPGGQATIEKLADLMGV) is the 4Fe-4S domain. The [4Fe-4S] cluster site is built by C49, C52, C57, C73, C114, C117, C120, C124, C144, C147, C150, and C154. 2 consecutive 4Fe-4S ferredoxin-type domains span residues 105–134 (TVAF…GGTK) and 135–164 (ALHT…MIPV).

This sequence belongs to the 4Fe4S bacterial-type ferredoxin family. RnfB subfamily. As to quaternary structure, the complex is composed of six subunits: RnfA, RnfB, RnfC, RnfD, RnfE and RnfG. [4Fe-4S] cluster is required as a cofactor.

The protein resides in the cell inner membrane. In terms of biological role, part of a membrane-bound complex that couples electron transfer with translocation of ions across the membrane. The protein is Ion-translocating oxidoreductase complex subunit B of Vibrio campbellii (strain ATCC BAA-1116).